The following is a 164-amino-acid chain: Heat shock protein beta-6 (164 aa).

The involved in stabilization of the HSPB1:HSBP6 heterodimer stretch occupies residues 1–72 (MEIPVSVQPS…PTAQVSTDPG (72 aa)). Ser16 bears the Phosphoserine mark. The region spanning 56–163 (RAPSVALPTA…PLQSPPGAAA (108 aa)) is the sHSP domain. Gln66 is modified (deamidated glutamine). Position 157 is a phosphoserine (Ser157).

It belongs to the small heat shock protein (HSP20) family. As to quaternary structure, homodimer. Small heat shock proteins form high molecular mass oligomers containing variable number of monomers; these oligomers display a very flexible quaternary structure easily exchanging their subunits. Heterooligomer with HSPB1; formed through oligomerization of HSPB1:HSBP6 dimers; subunit exchange leads to formation of at least two different heterooligomeric complexes, differing in variable quantities of HSPB1 and HSPB6 homodimers in addition to HSPB1:HSPB6 heterodimers. Heterooligomer with CRYAB; large heterooligomers consist of CRYAB homodimers and HSPB5:HSPB6 heterodimers but lacking HSPB6 homodimers. Interacts with BAG3. Interacts (phosphorylated) with YWHAZ. Interacts with PDE4A and PDE4D; required for maintenance of the non-phosphorylated state of HSPB6 under basal conditions. Interacts with KDR. Interacts with PRKD1. In terms of processing, phosphorylated at Ser-16 by PKA and probably PKD1K; required to protect cardiomyocytes from apoptosis.

It is found in the cytoplasm. It localises to the nucleus. Its subcellular location is the secreted. Functionally, small heat shock protein which functions as a molecular chaperone probably maintaining denatured proteins in a folding-competent state. Seems to have versatile functions in various biological processes. Plays a role in regulating muscle function such as smooth muscle vasorelaxation and cardiac myocyte contractility. May regulate myocardial angiogenesis implicating KDR. Overexpression mediates cardioprotection and angiogenesis after induced damage. Stabilizes monomeric YWHAZ thereby supporting YWHAZ chaperone-like activity. This chain is Heat shock protein beta-6 (HSPB6), found in Bos taurus (Bovine).